The sequence spans 151 residues: Large ribosomal subunit protein uL22 (151 aa).

Residues 1 to 25 (MARINYSVKEDPETTSKAMGSELHI) form a disordered region.

Belongs to the universal ribosomal protein uL22 family. Part of the 50S ribosomal subunit.

This protein binds specifically to 23S rRNA. It makes multiple contacts with different domains of the 23S rRNA in the assembled 50S subunit and ribosome. Functionally, the globular domain of the protein is located near the polypeptide exit tunnel on the outside of the subunit, while an extended beta-hairpin is found that lines the wall of the exit tunnel in the center of the 70S ribosome. The protein is Large ribosomal subunit protein uL22 of Methanosarcina barkeri (strain Fusaro / DSM 804).